Here is a 592-residue protein sequence, read N- to C-terminus: Syntaxin-binding protein 3 (592 aa).

Positions 1-255 are mediates interaction with DOC2B; sequence MAPPVSERGL…STVLHELTFQ (255 aa).

The protein belongs to the STXBP/unc-18/SEC1 family. Interacts with STX4. Interacts with DOC2B; the interaction is direct, occurs at the cell membrane, excludes interaction with STX4 and regulates glucose-stimulated insulin secretion. Post-translationally, phosphorylated by PKC in platelets in response to thrombin stimulation; phosphorylation inhibits binding to STX4. As to expression, ubiquitously expressed in all tissues tested.

It localises to the cytoplasm. It is found in the cytosol. The protein localises to the cell membrane. Functionally, together with STX4 and VAMP2, may play a role in insulin-dependent movement of GLUT4 and in docking/fusion of intracellular GLUT4-containing vesicles with the cell surface in adipocytes. In Mus musculus (Mouse), this protein is Syntaxin-binding protein 3 (Stxbp3).